The chain runs to 404 residues: GTPase Obg (404 aa).

The 159-residue stretch at 1–159 folds into the Obg domain; sequence MKFIDEARIE…RALRLELKVL (159 aa). The disordered stretch occupies residues 22–43; it reads SFRREKFIPRGGPDGGDGGRGG. The segment covering 33 to 43 has biased composition (gly residues); it reads GPDGGDGGRGG. In terms of domain architecture, OBG-type G spans 160-334; that stretch reads ADVGLLGMPN…LVFAIQDFLD (175 aa). Residues 166–173, 191–195, 213–216, 284–287, and 315–317 contribute to the GTP site; these read GMPNAGKS, FTTLA, DIPG, NKLD, and SAL. Positions 173 and 193 each coordinate Mg(2+). A disordered region spans residues 373–404; the sequence is LLAEGETGTGDDGRDGNENDPADEQDTNRPNH.

This sequence belongs to the TRAFAC class OBG-HflX-like GTPase superfamily. OBG GTPase family. In terms of assembly, monomer. Requires Mg(2+) as cofactor.

The protein resides in the cytoplasm. An essential GTPase which binds GTP, GDP and possibly (p)ppGpp with moderate affinity, with high nucleotide exchange rates and a fairly low GTP hydrolysis rate. Plays a role in control of the cell cycle, stress response, ribosome biogenesis and in those bacteria that undergo differentiation, in morphogenesis control. This Aromatoleum aromaticum (strain DSM 19018 / LMG 30748 / EbN1) (Azoarcus sp. (strain EbN1)) protein is GTPase Obg.